The sequence spans 105 residues: Heat shock protein HspQ (105 aa).

Positions 75 to 105 (SELQDEHPEQPSMDELAQTIRKQLQAPRLRN) are disordered.

The protein belongs to the HspQ family.

It is found in the cytoplasm. In terms of biological role, involved in the degradation of certain denaturated proteins, including DnaA, during heat shock stress. In Escherichia coli O127:H6 (strain E2348/69 / EPEC), this protein is Heat shock protein HspQ.